A 586-amino-acid polypeptide reads, in one-letter code: 25S rRNA (adenine-N(1))-methyltransferase (586 aa).

Disordered stretches follow at residues Gly-23–Leu-229 and Gly-536–Asp-573. The span at Ala-25–Lys-41 shows a compositional bias: low complexity. The span at Leu-65–Lys-83 shows a compositional bias: basic and acidic residues. Residues Lys-99 to Asn-108 show a composition bias toward polar residues. Over residues Asn-114–Asn-123 the composition is skewed to basic residues. Positions Gly-144 to Glu-163 are enriched in acidic residues. A compositionally biased stretch (basic and acidic residues) spans Asp-164–Gln-182. The span at Gln-183 to Lys-192 shows a compositional bias: low complexity. The span at Asn-204–Asp-213 shows a compositional bias: polar residues. The segment covering Pro-217–Leu-229 has biased composition (low complexity). The span at Val-539–Lys-549 shows a compositional bias: basic and acidic residues. Residues Asn-550–Pro-559 are compositionally biased toward basic residues.

The protein belongs to the methyltransferase superfamily. RRP8 family.

The protein resides in the nucleus. Its subcellular location is the nucleolus. Functionally, S-adenosyl-L-methionine-dependent methyltransferase that specifically methylates the N(1) position of a conserved adenine in helix 25.1 in 25S rRNA. Required both for ribosomal 40S and 60S subunits biogenesis. Required for efficient pre-rRNA cleavage at site A2. The chain is 25S rRNA (adenine-N(1))-methyltransferase (RPR8) from Chaetomium thermophilum (strain DSM 1495 / CBS 144.50 / IMI 039719) (Thermochaetoides thermophila).